Here is a 391-residue protein sequence, read N- to C-terminus: 3-ketoacyl-CoA thiolase (391 aa).

The active-site Acyl-thioester intermediate is cysteine 95. Catalysis depends on proton acceptor residues histidine 347 and cysteine 377.

Belongs to the thiolase-like superfamily. Thiolase family. In terms of assembly, heterotetramer of two alpha chains (FadB) and two beta chains (FadA).

It localises to the cytoplasm. The enzyme catalyses an acyl-CoA + acetyl-CoA = a 3-oxoacyl-CoA + CoA. Its pathway is lipid metabolism; fatty acid beta-oxidation. Functionally, catalyzes the final step of fatty acid oxidation in which acetyl-CoA is released and the CoA ester of a fatty acid two carbons shorter is formed. This is 3-ketoacyl-CoA thiolase from Hahella chejuensis (strain KCTC 2396).